The sequence spans 236 residues: Leucyl/phenylalanyl-tRNA--protein transferase (236 aa).

Belongs to the L/F-transferase family.

The protein localises to the cytoplasm. It carries out the reaction N-terminal L-lysyl-[protein] + L-leucyl-tRNA(Leu) = N-terminal L-leucyl-L-lysyl-[protein] + tRNA(Leu) + H(+). It catalyses the reaction N-terminal L-arginyl-[protein] + L-leucyl-tRNA(Leu) = N-terminal L-leucyl-L-arginyl-[protein] + tRNA(Leu) + H(+). The enzyme catalyses L-phenylalanyl-tRNA(Phe) + an N-terminal L-alpha-aminoacyl-[protein] = an N-terminal L-phenylalanyl-L-alpha-aminoacyl-[protein] + tRNA(Phe). Its function is as follows. Functions in the N-end rule pathway of protein degradation where it conjugates Leu, Phe and, less efficiently, Met from aminoacyl-tRNAs to the N-termini of proteins containing an N-terminal arginine or lysine. In Yersinia enterocolitica serotype O:8 / biotype 1B (strain NCTC 13174 / 8081), this protein is Leucyl/phenylalanyl-tRNA--protein transferase.